The chain runs to 239 residues: Ribosomal RNA small subunit methyltransferase G (239 aa).

S-adenosyl-L-methionine-binding positions include glycine 79, phenylalanine 84, 130-131 (AE), and arginine 149. A compositionally biased stretch (basic residues) spans 218–227 (KHKKTPKKYP). The tract at residues 218–239 (KHKKTPKKYPRQAGTPNKKPIA) is disordered.

It belongs to the methyltransferase superfamily. RNA methyltransferase RsmG family.

It localises to the cytoplasm. Specifically methylates the N7 position of a guanine in 16S rRNA. The chain is Ribosomal RNA small subunit methyltransferase G from Leuconostoc citreum (strain KM20).